The chain runs to 208 residues: NAD(P)H-quinone oxidoreductase subunit I (208 aa).

4Fe-4S ferredoxin-type domains are found at residues 55 to 84 (GRIH…VDWV) and 95 to 124 (RNYS…MTEE). 8 residues coordinate [4Fe-4S] cluster: Cys-64, Cys-67, Cys-70, Cys-74, Cys-104, Cys-107, Cys-110, and Cys-114.

Belongs to the complex I 23 kDa subunit family. In terms of assembly, NDH-1 is composed of at least 11 different subunits. [4Fe-4S] cluster serves as cofactor.

Its subcellular location is the cellular thylakoid membrane. It catalyses the reaction a plastoquinone + NADH + (n+1) H(+)(in) = a plastoquinol + NAD(+) + n H(+)(out). The enzyme catalyses a plastoquinone + NADPH + (n+1) H(+)(in) = a plastoquinol + NADP(+) + n H(+)(out). NDH-1 shuttles electrons from an unknown electron donor, via FMN and iron-sulfur (Fe-S) centers, to quinones in the respiratory and/or the photosynthetic chain. The immediate electron acceptor for the enzyme in this species is believed to be plastoquinone. Couples the redox reaction to proton translocation, and thus conserves the redox energy in a proton gradient. The protein is NAD(P)H-quinone oxidoreductase subunit I of Prochlorococcus marinus subsp. pastoris (strain CCMP1986 / NIES-2087 / MED4).